Here is a 532-residue protein sequence, read N- to C-terminus: Zinc finger protein ZIC 2 (532 aa).

The tract at residues 100 to 255 (PHAAHVGSYS…YMRQQCIKQE (156 aa)) is necessary for interaction with MDFIC and transcriptional activation or repression. 2 positions are modified to phosphoserine: Ser-191 and Ser-199. Lys-253 participates in a covalent cross-link: Glycyl lysine isopeptide (Lys-Gly) (interchain with G-Cter in SUMO2). Residues 256 to 291 (LICKWIDPEQLSNPKKSCNKTFSTMHELVTHVSVEH) form a C2H2-type 1; atypical zinc finger. A C2H2-type 2; atypical zinc finger spans residues 300–327 (HVCFWEECPREGKPFKAKYKLVNHIRVH). 3 C2H2-type zinc fingers span residues 333 to 357 (FPCPFPGCGKVFARSENLKIHKRTH), 363 to 387 (FQCEFEGCDRRFANSSDRKKHMHVH), and 393 to 415 (YLCKMCDKSYTHPSSLRKHMKVH). 2 disordered regions span residues 406-452 (SSLR…SSSN) and 475-532 (HRGG…EWYV). Residues 417-435 (SSPQGSESSPAASSGYESS) are compositionally biased toward low complexity. Positions 476–521 (RGGGSGSGGAGGGSGGGSGSGGGGGGAGGGGGGSSGGGSGTAGGHS) are enriched in gly residues. The span at 523-532 (LSSNFNEWYV) shows a compositional bias: polar residues.

The protein belongs to the GLI C2H2-type zinc-finger protein family. Interacts with RNF180. Interacts (via the C2H2-type domains 3, 4 and 5) with MDFIC (via the C2H2-type domains 3, 4 and 5); the interaction reduces its transcriptional activity. Interacts with GLI1 and GLI2. Interacts (via C2H2-type domain 3) with DHX9. Post-translationally, phosphorylated. In terms of processing, ubiquitinated by RNF180, leading to its degradation.

It is found in the nucleus. The protein resides in the cytoplasm. Its function is as follows. Acts as a transcriptional activator or repressor. Plays important roles in the early stage of organogenesis of the CNS. Activates the transcription of the serotonin transporter SERT in uncrossed ipsilateral retinal ganglion cells (iRGCs) to refine eye-specific projections in primary visual targets. Its transcriptional activity is repressed by MDFIC. Involved in the formation of the ipsilateral retinal projection at the optic chiasm midline. Drives the expression of EPHB1 on ipsilaterally projecting growth cones. Binds to the minimal GLI-consensus sequence 5'-TGGGTGGTC-3'. Associates to the basal SERT promoter region from ventrotemporal retinal segments of retinal embryos. The polypeptide is Zinc finger protein ZIC 2 (ZIC2) (Homo sapiens (Human)).